Consider the following 370-residue polypeptide: Death-associated protein kinase 2 (370 aa).

The 263-residue stretch at 23–285 folds into the Protein kinase domain; that stretch reads YDIGEELGSG…IQEALRHPWI (263 aa). ATP-binding positions include 29–37 and K52; that span reads LGSGQFAIV. Catalysis depends on D149, which acts as the Proton acceptor. Residues 277 to 344 form a calmodulin-binding region; that stretch reads QEALRHPWIT…KVHLRPDEDL (68 aa). The tract at residues 292 to 301 is autoinhibitory domain; the sequence is QAMVRRESVV. At S299 the chain carries Phosphoserine. S318 carries the post-translational modification Phosphoserine; by autocatalysis. Residues 348–370 form a disordered region; it reads ESDTEEDIARRKALHPRRRSSTS. S349 carries the post-translational modification Phosphoserine. The segment covering 358–370 has biased composition (basic residues); that stretch reads RKALHPRRRSSTS. T369 carries the post-translational modification Phosphothreonine; by PKB/AKT1.

This sequence belongs to the protein kinase superfamily. CAMK Ser/Thr protein kinase family. DAP kinase subfamily. Homodimer in its autoinhibited state. Active as monomer. Isoform 2 but not isoform 1 can interact with ATF4. Interacts with 14-3-3 proteins YWHAB, YWHAE, YWHAG, YWHAH, YWHAQ, YWHAZ and SFN; the interaction requires DAPK2 phosphorylation at Thr-369 and suppresses DAPK2 kinase activity and DAPK2-induced apoptosis. Mg(2+) serves as cofactor. In terms of processing, autophosphorylation at Ser-318 inhibits its catalytic activity. Dephosphorylated at Ser-318 in response to activated Fas and TNF-alpha receptors. In terms of tissue distribution, expressed in neutrophils and eosinophils. Isoform 2 is expressed in embryonic stem cells (at protein level). Isoform 1 is ubiquitously expressed in all tissue types examined with high levels in heart, lung and skeletal muscle.

The protein resides in the cytoplasm. Its subcellular location is the cytoplasmic vesicle. It localises to the autophagosome lumen. The enzyme catalyses L-seryl-[protein] + ATP = O-phospho-L-seryl-[protein] + ADP + H(+). It catalyses the reaction L-threonyl-[protein] + ATP = O-phospho-L-threonyl-[protein] + ADP + H(+). With respect to regulation, activated by Ca(2+)/calmodulin. Regulated by a double locking mechanism, involving autophosphorylation at Ser-318, calmodulin binding, and dimerization. In the inactive state, Ser-318 is phosphorylated, and the kinase is dimeric. Activation involves: dephosphorylation at Ser-318, release-of-autoinhibition mechanism where calmodulin binding induces a conformational change that relieves the steric block of the active site by the autoinhibitory domain, and generation of the monomeric active form of the kinase. In terms of biological role, calcium/calmodulin-dependent serine/threonine kinase involved in multiple cellular signaling pathways that trigger cell survival, apoptosis, and autophagy. Regulates both type I apoptotic and type II autophagic cell death signals, depending on the cellular setting. The former is caspase-dependent, while the latter is caspase-independent and is characterized by the accumulation of autophagic vesicles. Acts as a mediator of anoikis and a suppressor of beta-catenin-dependent anchorage-independent growth of malignant epithelial cells. May play a role in granulocytic maturation. Regulates granulocytic motility by controlling cell spreading and polarization. Its function is as follows. Isoform 2 is not regulated by calmodulin. It can phosphorylate MYL9. It can induce membrane blebbing and autophagic cell death. This Homo sapiens (Human) protein is Death-associated protein kinase 2 (DAPK2).